We begin with the raw amino-acid sequence, 550 residues long: Sorting nexin-33 (550 aa).

Residues 1–61 (MALKARALYS…PASYVEIQSS (61 aa)) enclose the SH3 domain. Positions 62–152 (RSGSVQVDYS…QDSIASGKRG (91 aa)) are disordered. Residues 86–102 (YDDDDEEDDDDWDDWDD) show a composition bias toward acidic residues. Residues 128–144 (SRPEYSHRPRPALERQD) are compositionally biased toward basic and acidic residues. The PX domain maps to 206–316 (FNCSVEEPTK…HFLGCQDEKQ (111 aa)). The BAR domain occupies 347-550 (LQDVEERVDV…EKTLHLYDEL (204 aa)).

Belongs to the sorting nexin family.

Its subcellular location is the cytoplasm. The protein localises to the cytosol. It localises to the membrane. The protein resides in the cytoplasmic vesicle membrane. Plays a role in the reorganization of the cytoskeleton, endocytosis and cellular vesicle trafficking, both during interphase and at the end of mitotic cell divisions. Required for efficient progress through mitosis and cytokinesis. Required for normal formation of the cleavage furrow at the end of mitosis. Modulates endocytosis of cell-surface proteins. Promotes membrane tubulation (in vitro). May promote the formation of macropinosomes. This is Sorting nexin-33 (snx33) from Xenopus laevis (African clawed frog).